Reading from the N-terminus, the 117-residue chain is Large ribosomal subunit protein bL20c (117 aa).

It belongs to the bacterial ribosomal protein bL20 family.

The protein resides in the plastid. The protein localises to the chloroplast. Binds directly to 23S ribosomal RNA and is necessary for the in vitro assembly process of the 50S ribosomal subunit. It is not involved in the protein synthesizing functions of that subunit. This Chloranthus spicatus (Chulantree) protein is Large ribosomal subunit protein bL20c.